The primary structure comprises 177 residues: Large ribosomal subunit protein uL6 (177 aa).

Belongs to the universal ribosomal protein uL6 family. In terms of assembly, part of the 50S ribosomal subunit.

Its function is as follows. This protein binds to the 23S rRNA, and is important in its secondary structure. It is located near the subunit interface in the base of the L7/L12 stalk, and near the tRNA binding site of the peptidyltransferase center. The protein is Large ribosomal subunit protein uL6 of Afipia carboxidovorans (strain ATCC 49405 / DSM 1227 / KCTC 32145 / OM5) (Oligotropha carboxidovorans).